A 344-amino-acid chain; its full sequence is Small ribosomal subunit biogenesis GTPase RsgA (344 aa).

Residues 100–268 (KNELSRPDYY…LIDSPGIREF (169 aa)) form the CP-type G domain. Residues 156–159 (NKID) and 210–218 (GQSGVGKSS) each bind GTP. 4 residues coordinate Zn(2+): Cys-292, Cys-297, His-299, and Cys-305.

It belongs to the TRAFAC class YlqF/YawG GTPase family. RsgA subfamily. Monomer. Associates with 30S ribosomal subunit, binds 16S rRNA. Zn(2+) is required as a cofactor.

It is found in the cytoplasm. One of several proteins that assist in the late maturation steps of the functional core of the 30S ribosomal subunit. Helps release RbfA from mature subunits. May play a role in the assembly of ribosomal proteins into the subunit. Circularly permuted GTPase that catalyzes slow GTP hydrolysis, GTPase activity is stimulated by the 30S ribosomal subunit. This chain is Small ribosomal subunit biogenesis GTPase RsgA, found in Actinobacillus pleuropneumoniae serotype 5b (strain L20).